Here is a 258-residue protein sequence, read N- to C-terminus: 14-3-3 protein homolog (258 aa).

Belongs to the 14-3-3 family.

The protein is 14-3-3 protein homolog of Encephalitozoon cuniculi (strain GB-M1) (Microsporidian parasite).